The sequence spans 434 residues: Histidinol dehydrogenase (434 aa).

3 residues coordinate NAD(+): Tyr130, Gln188, and Asn211. Substrate is bound by residues Ser237, Gln259, and His262. Residues Gln259 and His262 each contribute to the Zn(2+) site. Active-site proton acceptor residues include Glu326 and His327. Residues His327, Asp360, Glu414, and His419 each contribute to the substrate site. Residue Asp360 participates in Zn(2+) binding. Zn(2+) is bound at residue His419.

The protein belongs to the histidinol dehydrogenase family. In terms of assembly, homodimer. It depends on Zn(2+) as a cofactor.

The enzyme catalyses L-histidinol + 2 NAD(+) + H2O = L-histidine + 2 NADH + 3 H(+). The protein operates within amino-acid biosynthesis; L-histidine biosynthesis; L-histidine from 5-phospho-alpha-D-ribose 1-diphosphate: step 9/9. In terms of biological role, catalyzes the sequential NAD-dependent oxidations of L-histidinol to L-histidinaldehyde and then to L-histidine. This Salmonella typhi protein is Histidinol dehydrogenase.